The sequence spans 199 residues: Ribonuclease HII (199 aa).

One can recognise an RNase H type-2 domain in the interval 7–196; that stretch reads PWVCGVDEAG…VRELMANEKD (190 aa). A divalent metal cation is bound by residues Asp13, Glu14, and Asp105.

The protein belongs to the RNase HII family. It depends on Mn(2+) as a cofactor. Mg(2+) is required as a cofactor.

The protein localises to the cytoplasm. The enzyme catalyses Endonucleolytic cleavage to 5'-phosphomonoester.. Its function is as follows. Endonuclease that specifically degrades the RNA of RNA-DNA hybrids. This Nitrosospira multiformis (strain ATCC 25196 / NCIMB 11849 / C 71) protein is Ribonuclease HII.